A 161-amino-acid polypeptide reads, in one-letter code: Cystatin cpi-2 (161 aa).

A signal peptide spans 1–25 (MMSTMSIKEGLLVILLSLFLFDTTA). The Important for interaction with host LGMN signature appears at 76–78 (SND). N89 is a glycosylation site (N-linked (GlcNAc...) asparagine). The Secondary area of contact motif lies at 93–97 (QVVAG). C111 and C124 form a disulfide bridge.

The protein belongs to the cystatin family.

Its function is as follows. Cysteine protease inhibitor which inhibits members of the peptidase C1 family. Also acts as an asparaginyl endopeptidase inhibitor. In the human host, inhibits CTSL/cathepsin L, CTSS/cathepsin S, CTSB/cathepsin B and asparaginyl endopeptidase LGMN/AEP which may cause defects in both antigen and MHC class II invariant chain CD74/Ii processing. This chain is Cystatin cpi-2, found in Brugia malayi (Filarial nematode worm).